We begin with the raw amino-acid sequence, 172 residues long: uncharacterized protein (172 aa).

2 disordered regions span residues 1–39 (MAKVSNYNNNNNNNNNNNNNNNNNNNYNQNSNNNINSNN) and 90–112 (DLNGDDTFNDSNNDNSPSRGSIN). A compositionally biased stretch (low complexity) spans 98 to 110 (NDSNNDNSPSRGS).

This is an uncharacterized protein from Dictyostelium discoideum (Social amoeba).